Here is a 309-residue protein sequence, read N- to C-terminus: Probable non-structural 36.3 kDa protein (309 aa).

The polypeptide is Probable non-structural 36.3 kDa protein (S6) (Avena sativa (Oat)).